The primary structure comprises 478 residues: Lysosome membrane protein 2 (478 aa).

The Cytoplasmic portion of the chain corresponds to 1–4 (MGRC). The helical transmembrane segment at 5 to 27 (CFYTAGTLSLLLLVTSVTLLVAR) threads the bilayer. Topologically, residues 28-433 (VFQKAVDQSI…RLKSMINTTL (406 aa)) are lumenal. N-linked (GlcNAc...) asparagine glycans are attached at residues N45, N68, and N105. The important for interaction with GBA1 stretch occupies residues 155-191 (IIEAMLKAYQQKLFVTHTVDELLWGYKDEILSLIHVF). Residues N206, N224, N249, and N304 are each glycosylated (N-linked (GlcNAc...) asparagine). Cystine bridges form between C274-C329 and C312-C318. 3 N-linked (GlcNAc...) asparagine glycosylation sites follow: N325, N412, and N430. The helical transmembrane segment at 434 to 459 (IITNIPYIIMALGVFFGLVFTWLACK) threads the bilayer. The Cytoplasmic portion of the chain corresponds to 460-478 (GQGSMDEGTADERAPLIRT).

This sequence belongs to the CD36 family. Interacts with GBA1. In terms of assembly, (Microbial infection) Interacts with enterovirus 71 capsid proteins VP1 and VP2.

It localises to the lysosome membrane. Functionally, acts as a lysosomal receptor for glucosylceramidase (GBA1) targeting. (Microbial infection) Acts as a receptor for enterovirus 71. This chain is Lysosome membrane protein 2 (SCARB2), found in Homo sapiens (Human).